The sequence spans 174 residues: MKTRLGCLSNKSDSCSDFSEFLPPAQERTTRCLKLSNDEVTRWADSFDILLSNKYGLAAFRTFLKTEFSDENIEFWLACEDYKKIKSPAKMMSKANKIYKEFIDVHAPREVNIDHRTREETKNRLLEPTPHSLNEVQAKVYSLMEKDSYPRFIRSKIYQDLLNRTQIYCQRKSV.

The RGS domain maps to 46–162; it reads SFDILLSNKY…IRSKIYQDLL (117 aa).

The protein resides in the cell membrane. It is found in the membrane. The protein localises to the perikaryon. Its subcellular location is the cell projection. It localises to the dendrite. The protein resides in the nucleus. Its function is as follows. Regulates G protein-coupled receptor signaling cascades, including signaling via muscarinic acetylcholine receptors and dopamine receptors. Inhibits signal transduction by increasing the GTPase activity of G protein alpha subunits, thereby driving them into their inactive GDP-bound form. Modulates the activity of potassium channels that are activated in response to G protein-coupled receptor signaling. The protein is Regulator of G-protein signaling 8 (rgs8) of Danio rerio (Zebrafish).